We begin with the raw amino-acid sequence, 182 residues long: MSPIIAPPAELVDPKDRVQLRRVFGDFPTGVTVVTVGGSEPRGMTANSFTSVSLSPPLVLICVGKDAVMHQRLTALPTFAVSVLEAGQEKAARHFADHSRPPGVDQFDTVDWVLGEESGAPLIAGAVAHLECAIHRLYEGGDHTIFLGEVITATRWPAREGMLFSGGRFRRFAPDADEGRAA.

Asp-16 contacts NAD(+). Residues 47–48 (NS), 62–64 (CVG), and His-98 contribute to the FAD site. Position 143 (His-143) interacts with NAD(+).

It belongs to the non-flavoprotein flavin reductase family. As to quaternary structure, homodimer.

The enzyme catalyses FADH2 + NAD(+) = FAD + NADH + 2 H(+). The protein operates within antibiotic biosynthesis. With respect to regulation, the SgcE6-SgcC hydroxylation activity decreases in the presence of excess FAD. In terms of biological role, reductase component of a two-component system involved in the biosynthesis of the enediyne antitumor antibiotic C-1027. SgcE6 provides the FADH(2) required by both the halogenase SgcC3 and the monooxygenase SgcC through free diffusion. Accepts only NADH and FAD as substrates. This Streptomyces globisporus protein is NADH-dependent FAD reductase.